Reading from the N-terminus, the 367-residue chain is GDSL esterase/lipase At4g28780 (367 aa).

An N-terminal signal peptide occupies residues M1 to A28. Catalysis depends on S38, which acts as the Nucleophile. N-linked (GlcNAc...) asparagine glycosylation is present at N119. Active-site residues include D328 and H331. A glycan (N-linked (GlcNAc...) asparagine) is linked at N356.

This sequence belongs to the 'GDSL' lipolytic enzyme family.

Its subcellular location is the secreted. In Arabidopsis thaliana (Mouse-ear cress), this protein is GDSL esterase/lipase At4g28780.